The sequence spans 332 residues: Aquaporin-7-1 (332 aa).

At Met-1–Glu-66 the chain is on the cytoplasmic side. Residues Phe-67–Ser-87 traverse the membrane as a helical segment. At Thr-88–Phe-100 the chain is on the extracellular side. Residues Leu-101–Ile-121 traverse the membrane as a helical segment. The Cytoplasmic segment spans residues Ser-122 to Arg-144. The short motif at Asn-127–Ala-129 is the NPA 1 element. A helical membrane pass occupies residues Val-145–Ala-165. Residues Asn-166–Gln-199 are Extracellular-facing. A helical transmembrane segment spans residues Val-200–Leu-220. Residues Thr-221–Asn-230 lie on the Cytoplasmic side of the membrane. A helical membrane pass occupies residues Gly-231–Glu-251. The Extracellular segment spans residues Thr-252–Gln-283. Residues Asn-257–Ala-259 carry the NPA 2 motif. The helical transmembrane segment at Tyr-284–Tyr-304 threads the bilayer. At Asp-305–Val-332 the chain is on the cytoplasmic side.

It belongs to the MIP/aquaporin (TC 1.A.8) family.

It localises to the membrane. The catalysed reaction is H2O(in) = H2O(out). Water channel required to facilitate the transport of water across membranes. Does not mediate the transport carbon dioxide across the membrane. This is Aquaporin-7-1 from Laccaria bicolor (Bicoloured deceiver).